The sequence spans 537 residues: Zinc finger and BTB domain-containing protein 18 (537 aa).

Residues C24–S91 form the BTB domain. Residues T122–S143 are compositionally biased toward basic and acidic residues. Disordered stretches follow at residues T122–A232 and A335–D355. 2 stretches are compositionally biased toward low complexity: residues R182 to P195 and S208 to R229. C2H2-type zinc fingers lie at residues F385–H407, P425–H447, Y453–H475, and H481–H504.

Belongs to the krueppel C2H2-type zinc-finger protein family. ZBTB18 subfamily.

The protein localises to the nucleus. Functionally, transcriptional repressor that plays a role in various developmental processes. Specifically binds the consensus DNA sequence 5'-[AC]ACATCTG[GT][AC]-3' which contains the E box core, and acts by recruiting chromatin remodeling multiprotein complexes. This Danio rerio (Zebrafish) protein is Zinc finger and BTB domain-containing protein 18 (zbtb18).